A 581-amino-acid chain; its full sequence is Leucine-rich repeat-containing protein 15 (581 aa).

A signal peptide spans 1 to 21 (MPLKHYLLLLVGCQAWGAGLA). Residues 22 to 53 (YHGCPSECTCSRASQVECTGARIVAVPTPLPW) enclose the LRRNT domain. Residues 22 to 538 (YHGCPSECTC…VWGMTQAQSG (517 aa)) lie on the Extracellular side of the membrane. 15 LRR repeats span residues 54-75 (NAMSLQILNTHITELNESPFLN), 78-99 (ALIALRIEKNELSRITPGAFRN), 102-123 (SLRYLSLANNKLQVLPIGLFQG), 126-147 (SLESLLLSSNQLLQIQPAHFSQ), 150-171 (NLKELQLHGNHLEYIPDGAFDH), 174-195 (GLTKLNLGKNSLTHISPRVFQH), 198-219 (NLQVLRLYENRLTDIPMGTFDG), 222-243 (NLQELALQQNQIGLLSPGLFHN), 246-267 (NLQRLYLSNNHISQLPPSVFMQ), 270-291 (QLNRLTLFGNSLKELSPGIFGP), 294-315 (NLRELWLYDNHISSLPDNVFSN), 318-339 (QLQVLILSRNQISFISPGAFNG), 342-363 (ELRELSLHTNALQDLDGNVFRM), 366-387 (NLQNISLQNNRLRQLPGNIFAN), and 390-411 (GLMAIQLQNNQLENLPLGIFDH). N-linked (GlcNAc...) asparagine glycosylation is present at Asn75. A glycan (N-linked (GlcNAc...) asparagine) is linked at Asn369. In terms of domain architecture, LRRCT spans 423–475 (NPWRCDSDILPLRNWLLLNQPRLGTDTVPVCFSPANVRGQSLIIINVNVAVPS). A disordered region spans residues 489–509 (WYPDTPSYPDTTSVSSTTELT). Residues 499 to 509 (TTSVSSTTELT) show a composition bias toward low complexity. The helical transmembrane segment at 539 to 559 (LAIAAIVIGIVALACSLAACV) threads the bilayer. Residues 560-581 (GCCCCKKRSQAVLMQMKAPNEC) are Cytoplasmic-facing.

(Microbial infection) Interacts with human coronavirus SARS-CoV-2 spike protein (via RBD domain); the interaction is direct and sequesters virions at the cell surface. In terms of assembly, (Microbial infection) Interacts with human coronavirus SARS-CoV-2 spike protein (via RBD domain); the interaction is direct. As to expression, expressed in brain and placenta. Expressed in lung fibroblasts. Expressed in chodrocytes.

The protein resides in the cell membrane. In terms of biological role, (Microbial infection) Modulates the ability of SARS-CoV-2 to infect host cells through interaction with the spike protein. Does not act as a SARS-CoV-2 entry receptor but sequesters virions and antagonizes in trans SARS-CoV-2 infection of ACE2(+) cells when expressed on nearby cells. The polypeptide is Leucine-rich repeat-containing protein 15 (LRRC15) (Homo sapiens (Human)).